Consider the following 342-residue polypeptide: Farnesyl pyrophosphate synthase 2 (342 aa).

Residues Lys48, Arg51, and Gln86 each contribute to the isopentenyl diphosphate site. Mg(2+)-binding residues include Asp93 and Asp97. Arg102 contacts dimethylallyl diphosphate. Arg103 is an isopentenyl diphosphate binding site. Dimethylallyl diphosphate is bound by residues Lys190, Thr191, Gln229, Lys246, and Lys255.

The protein belongs to the FPP/GGPP synthase family. Requires Mg(2+) as cofactor.

The protein localises to the cytoplasm. It carries out the reaction isopentenyl diphosphate + dimethylallyl diphosphate = (2E)-geranyl diphosphate + diphosphate. It catalyses the reaction isopentenyl diphosphate + (2E)-geranyl diphosphate = (2E,6E)-farnesyl diphosphate + diphosphate. It functions in the pathway isoprenoid biosynthesis; farnesyl diphosphate biosynthesis; farnesyl diphosphate from geranyl diphosphate and isopentenyl diphosphate: step 1/1. Its pathway is isoprenoid biosynthesis; geranyl diphosphate biosynthesis; geranyl diphosphate from dimethylallyl diphosphate and isopentenyl diphosphate: step 1/1. Functionally, catalyzes the sequential condensation of isopentenyl pyrophosphate with the allylic pyrophosphates, dimethylallyl pyrophosphate, and then with the resultant geranylpyrophosphate to the ultimate product farnesyl pyrophosphate. This chain is Farnesyl pyrophosphate synthase 2 (FPS2), found in Parthenium argentatum (Guayule rubber plant).